Consider the following 449-residue polypeptide: Tubulin alpha-1C chain (449 aa).

The MREC motif motif lies at 1–4; the sequence is MREC. GTP is bound at residue Q11. Residue K40 is modified to N6-acetyllysine. Residues E71, S140, G144, T145, T179, N206, and N228 each coordinate GTP. E71 provides a ligand contact to Mg(2+). The active site involves E254. Position 282 is a 3'-nitrotyrosine (Y282). Residue Y432 is modified to Phosphotyrosine. S439 is subject to Phosphoserine. The residue at position 449 (Y449) is a 3'-nitrotyrosine.

It belongs to the tubulin family. As to quaternary structure, dimer of alpha and beta chains. A typical microtubule is a hollow water-filled tube with an outer diameter of 25 nm and an inner diameter of 15 nM. Alpha-beta heterodimers associate head-to-tail to form protofilaments running lengthwise along the microtubule wall with the beta-tubulin subunit facing the microtubule plus end conferring a structural polarity. Microtubules usually have 13 protofilaments but different protofilament numbers can be found in some organisms and specialized cells. Mg(2+) serves as cofactor. Post-translationally, some glutamate residues at the C-terminus are polyglycylated, resulting in polyglycine chains on the gamma-carboxyl group. Glycylation is mainly limited to tubulin incorporated into axonemes (cilia and flagella) whereas glutamylation is prevalent in neuronal cells, centrioles, axonemes, and the mitotic spindle. Both modifications can coexist on the same protein on adjacent residues, and lowering polyglycylation levels increases polyglutamylation, and reciprocally. Cilia and flagella glycylation is required for their stability and maintenance. Flagella glycylation controls sperm motility. In terms of processing, some glutamate residues at the C-terminus are polyglutamylated, resulting in polyglutamate chains on the gamma-carboxyl group. Polyglutamylation plays a key role in microtubule severing by spastin (SPAST). SPAST preferentially recognizes and acts on microtubules decorated with short polyglutamate tails: severing activity by SPAST increases as the number of glutamates per tubulin rises from one to eight, but decreases beyond this glutamylation threshold. Glutamylation is also involved in cilia motility. Acetylation of alpha chains at Lys-40 is located inside the microtubule lumen. This modification has been correlated with increased microtubule stability, intracellular transport and ciliary assembly. Post-translationally, methylation of alpha chains at Lys-40 is found in mitotic microtubules and is required for normal mitosis and cytokinesis contributing to genomic stability. In terms of processing, nitration of Tyr-449 is irreversible and interferes with normal dynein intracellular distribution. Undergoes a tyrosination/detyrosination cycle, the cyclic removal and re-addition of a C-terminal tyrosine residue by the enzymes tubulin tyrosine carboxypeptidase (MATCAP1, VASH1 or VASH2) and tubulin tyrosine ligase (TTL), respectively. Post-translationally, tyrosination promotes microtubule interaction with CAP-Gly domain-containing proteins such as CLIP1, CLIP2 and DCTN1. Tyrosination regulates the initiation of dynein-dynactin motility via interaction with DCTN1, which brings the dynein-dynactin complex into contact with microtubules. In neurons, tyrosinated tubulins mediate the initiation of retrograde vesicle transport. In terms of processing, detyrosination is involved in metaphase plate congression by guiding chromosomes during mitosis: detyrosination promotes interaction with CENPE, promoting pole-proximal transport of chromosomes toward the equator. Detyrosination increases microtubules-dependent mechanotransduction in dystrophic cardiac and skeletal muscle. In cardiomyocytes, detyrosinated microtubules are required to resist to contractile compression during contraction: detyrosination promotes association with desmin (DES) at force-generating sarcomeres, leading to buckled microtubules and mechanical resistance to contraction.

The protein resides in the cytoplasm. Its subcellular location is the cytoskeleton. The enzyme catalyses GTP + H2O = GDP + phosphate + H(+). Functionally, tubulin is the major constituent of microtubules, a cylinder consisting of laterally associated linear protofilaments composed of alpha- and beta-tubulin heterodimers. Microtubules grow by the addition of GTP-tubulin dimers to the microtubule end, where a stabilizing cap forms. Below the cap, tubulin dimers are in GDP-bound state, owing to GTPase activity of alpha-tubulin. This Rattus norvegicus (Rat) protein is Tubulin alpha-1C chain (Tuba1c).